A 183-amino-acid polypeptide reads, in one-letter code: U3 small nucleolar ribonucleoprotein protein imp3 (183 aa).

The S4 RNA-binding domain occupies 108-174 (RRLPVVMRNI…IKKHVMDYNN (67 aa)).

The protein belongs to the universal ribosomal protein uS4 family. Component of a heterotrimeric complex containing imp3, imp4 and mpp10.

The protein resides in the nucleus. The protein localises to the nucleolus. Component of the U3 small nucleolar ribonucleoprotein. Required for the early cleavages at sites A0, A1 and A2 during 18S ribosomal pre-RNA processing. This is U3 small nucleolar ribonucleoprotein protein imp3 from Caenorhabditis elegans.